The chain runs to 274 residues: Transmembrane O-methyltransferase (274 aa).

A helical transmembrane segment spans residues 14–34; that stretch reads VGTMSPAIALAFLPLVVTLLV. S-adenosyl-L-methionine-binding positions include Glu120, 122 to 123, Ser128, Glu146, and Ser176; that span reads GT.

Belongs to the class I-like SAM-binding methyltransferase superfamily. Cation-dependent O-methyltransferase family. In terms of assembly, interacts with LHFPL5, PCDH15, TMC1, TMC2 and TMIE. Interacts directly with TMC1. The interaction of TOMT with TMC1 and TMC2 is required for the transportation of TMC1/2 into the stereocilia of hair cells.

It is found in the membrane. The protein localises to the cytoplasm. The protein resides in the endoplasmic reticulum. The enzyme catalyses a catechol + S-adenosyl-L-methionine = a guaiacol + S-adenosyl-L-homocysteine + H(+). In terms of biological role, catalyzes the O-methylation, and thereby the inactivation, of catecholamine neurotransmitters and catechol hormones. Required for auditory function. Component of the cochlear hair cell's mechanotransduction (MET) machinery. Involved in the assembly of the asymmetric tip-link MET complex. Required for transportation of TMC1 and TMC2 proteins into the mechanically sensitive stereocilia of the hair cells. The function in MET is independent of the enzymatic activity. In Propithecus coquereli (Coquerel's sifaka), this protein is Transmembrane O-methyltransferase.